We begin with the raw amino-acid sequence, 1236 residues long: DNA topoisomerase 2 (1236 aa).

Residues Asn-65, Asn-96, 124 to 126, 137 to 144, and 354 to 356 contribute to the ATP site; these read SSN, GRHGYGAK, and QSK. A Toprim domain is found at 434–548; that stretch reads RTLIITEGDS…KLLQNNPGYI (115 aa). Positions 440, 517, and 519 each coordinate Mg(2+). The Topo IIA-type catalytic domain occupies 685–1101; the sequence is IPHCVDGLKP…TPVKMWLTEL (417 aa). The active-site O-(5'-phospho-DNA)-tyrosine intermediate is Tyr-775. An interaction with DNA region spans residues 956–965; that stretch reads ALAQRIYING. Residues 1161 to 1211 are disordered; sequence YEKPPPSKRRPGESVGGARPSDSAARTVGKRLVGSRSEFKNKKPMSRKNNV.

Belongs to the type II topoisomerase family. As to quaternary structure, homodimer. It depends on Mg(2+) as a cofactor. Mn(2+) serves as cofactor. Requires Ca(2+) as cofactor.

Its subcellular location is the nucleus. The enzyme catalyses ATP-dependent breakage, passage and rejoining of double-stranded DNA.. Its function is as follows. Control of topological states of DNA by transient breakage and subsequent rejoining of DNA strands. Topoisomerase II makes double-strand breaks. The protein is DNA topoisomerase 2 (TOP2) of Leishmania chagasi.